The primary structure comprises 523 residues: Putative glycerol-3-phosphate transporter 1 (523 aa).

Transmembrane regions (helical) follow at residues 29–49, 102–122, 133–153, 163–183, 196–216, 228–248, 306–326, 344–364, 368–388, 402–422, 444–464, and 468–488; these read LSYS…YASY, VLLG…MYFA, IFLT…GVGY, FLIM…SVVA, LIMG…SLIA, FVVP…FLPV, FALC…WLPF, GNLS…AGYI, IGAR…ALFF, SLMF…TTAV, AIID…TGYI, and GSWT…GLLL.

This sequence belongs to the major facilitator superfamily. Organophosphate:Pi antiporter (OPA) (TC 2.A.1.4) family.

The protein resides in the membrane. The polypeptide is Putative glycerol-3-phosphate transporter 1 (Arabidopsis thaliana (Mouse-ear cress)).